The primary structure comprises 284 residues: Nucleoid occlusion protein (284 aa).

The H-T-H motif DNA-binding region spans 143–162 (EALAQRVGKSQSAIANKMRL).

This sequence belongs to the ParB family.

The protein resides in the cytoplasm. Its subcellular location is the nucleoid. Effects nucleoid occlusion by binding relatively nonspecifically to DNA and preventing the assembly of the division machinery in the vicinity of the nucleoid, especially under conditions that disturb the cell cycle. It helps to coordinate cell division and chromosome segregation by preventing the formation of the Z ring through the nucleoid, which would cause chromosome breakage. In Listeria monocytogenes serovar 1/2a (strain ATCC BAA-679 / EGD-e), this protein is Nucleoid occlusion protein.